The following is a 336-amino-acid chain: MIEADRLISATGVREDEIIDRAIRPKMLADYTGQDPVCEQMEIFIEAARQRGEALDHLLIFGPPGLGKTTLANIVANEMGVNIKTTSGPVLEKAGDLAALLTNLEPNDVLFIDEIHRLSPVVEEVLYPAMEDYQLDIMIGEGPAARSIKLDLPPFTLIGATTRAGSLTSPLRDRFGIVQRLEFYNVKDLTDIVSRSARCLGLEMTGDGALELARRSRGTPRIANRLLRRVRDFAQVKSDGRIDGPIAARAMDMLDVDNEGFDFMDRKLLLAVIDKFMGGPVGLDNLAAAIGEEKDTIEDVLEPYLIQQGYLQRTPRGRMATPRAYAHFGLQRPDER.

The segment at 4–184 (ADRLISATGV…FGIVQRLEFY (181 aa)) is large ATPase domain (RuvB-L). Residues Ile23, Arg24, Gly65, Lys68, Thr69, Thr70, 131-133 (EDY), Arg174, Tyr184, and Arg221 each bind ATP. Thr69 lines the Mg(2+) pocket. The segment at 185 to 255 (NVKDLTDIVS…IAARAMDMLD (71 aa)) is small ATPAse domain (RuvB-S). Residues 258 to 336 (NEGFDFMDRK…HFGLQRPDER (79 aa)) are head domain (RuvB-H). Positions 313 and 318 each coordinate DNA.

Belongs to the RuvB family. Homohexamer. Forms an RuvA(8)-RuvB(12)-Holliday junction (HJ) complex. HJ DNA is sandwiched between 2 RuvA tetramers; dsDNA enters through RuvA and exits via RuvB. An RuvB hexamer assembles on each DNA strand where it exits the tetramer. Each RuvB hexamer is contacted by two RuvA subunits (via domain III) on 2 adjacent RuvB subunits; this complex drives branch migration. In the full resolvosome a probable DNA-RuvA(4)-RuvB(12)-RuvC(2) complex forms which resolves the HJ.

It is found in the cytoplasm. It catalyses the reaction ATP + H2O = ADP + phosphate + H(+). In terms of biological role, the RuvA-RuvB-RuvC complex processes Holliday junction (HJ) DNA during genetic recombination and DNA repair, while the RuvA-RuvB complex plays an important role in the rescue of blocked DNA replication forks via replication fork reversal (RFR). RuvA specifically binds to HJ cruciform DNA, conferring on it an open structure. The RuvB hexamer acts as an ATP-dependent pump, pulling dsDNA into and through the RuvAB complex. RuvB forms 2 homohexamers on either side of HJ DNA bound by 1 or 2 RuvA tetramers; 4 subunits per hexamer contact DNA at a time. Coordinated motions by a converter formed by DNA-disengaged RuvB subunits stimulates ATP hydrolysis and nucleotide exchange. Immobilization of the converter enables RuvB to convert the ATP-contained energy into a lever motion, pulling 2 nucleotides of DNA out of the RuvA tetramer per ATP hydrolyzed, thus driving DNA branch migration. The RuvB motors rotate together with the DNA substrate, which together with the progressing nucleotide cycle form the mechanistic basis for DNA recombination by continuous HJ branch migration. Branch migration allows RuvC to scan DNA until it finds its consensus sequence, where it cleaves and resolves cruciform DNA. The chain is Holliday junction branch migration complex subunit RuvB from Aeromonas salmonicida (strain A449).